The primary structure comprises 196 residues: UPF0340 protein TTHA0583 (196 aa).

This sequence belongs to the UPF0340 family.

This chain is UPF0340 protein TTHA0583, found in Thermus thermophilus (strain ATCC 27634 / DSM 579 / HB8).